Here is a 167-residue protein sequence, read N- to C-terminus: UPF0254 protein MJ1251 (167 aa).

Belongs to the UPF0254 family.

In Methanocaldococcus jannaschii (strain ATCC 43067 / DSM 2661 / JAL-1 / JCM 10045 / NBRC 100440) (Methanococcus jannaschii), this protein is UPF0254 protein MJ1251.